The sequence spans 443 residues: UDP-N-acetylmuramate--L-alanine ligase (443 aa).

110–116 (GAHGKTS) is a binding site for ATP.

This sequence belongs to the MurCDEF family.

It is found in the cytoplasm. The enzyme catalyses UDP-N-acetyl-alpha-D-muramate + L-alanine + ATP = UDP-N-acetyl-alpha-D-muramoyl-L-alanine + ADP + phosphate + H(+). It functions in the pathway cell wall biogenesis; peptidoglycan biosynthesis. Cell wall formation. The polypeptide is UDP-N-acetylmuramate--L-alanine ligase (Streptococcus agalactiae serotype Ia (strain ATCC 27591 / A909 / CDC SS700)).